The sequence spans 292 residues: MQKLIEKANTLMEALPYIRRFSGKTIVIKYGGHAMADEALKKSFALDVILLKYIGINTVIVHGGGPQINETLKRYGIVSQFVKGMRVTDEATMGVVEMVLTGQVNKEVVGYLNQHGGRAVGLSGKDGGLLLCKKLLQEVKNEQGVLETVDIGFVGDVVDVDSSILVTLEAGGFIPVIAPIGVGTGGESYNINADVVAGKVAAALKAEKLILLTDVSGVKDQGGNLLSSIALGDVPGLIEDGTITGGMIPKVTCCTDALTGGVHKAHIVDGRIEHAILLEIFTNVGIGTEIQA.

Substrate contacts are provided by residues 64–65 (GG), arginine 86, and asparagine 190.

Belongs to the acetylglutamate kinase family. ArgB subfamily.

It is found in the cytoplasm. The enzyme catalyses N-acetyl-L-glutamate + ATP = N-acetyl-L-glutamyl 5-phosphate + ADP. The protein operates within amino-acid biosynthesis; L-arginine biosynthesis; N(2)-acetyl-L-ornithine from L-glutamate: step 2/4. Its function is as follows. Catalyzes the ATP-dependent phosphorylation of N-acetyl-L-glutamate. This is Acetylglutamate kinase from Geotalea daltonii (strain DSM 22248 / JCM 15807 / FRC-32) (Geobacter daltonii).